Consider the following 205-residue polypeptide: Arginine exporter protein ArgO (205 aa).

6 helical membrane passes run 1–21, 37–57, 68–88, 112–132, 147–167, and 182–202; these read MLAVFLQGFALSAAMILPLGP, LMVASLCALSDIVLICGGIFG, LLALVTWGGVAFLLWYGWGAF, VVTMLAVTWLNPHVYLDTFVV, WFALGAVSASVVWFFALALLA, and IINTLVGVVMWGIALQLAWQG.

This sequence belongs to the LysE/ArgO transporter (TC 2.A.75) family.

The protein localises to the cell inner membrane. The catalysed reaction is L-arginine(in) = L-arginine(out). Functionally, involved in the export of arginine. Important to control the intracellular level of arginine and the correct balance between arginine and lysine. The sequence is that of Arginine exporter protein ArgO from Serratia proteamaculans (strain 568).